A 166-amino-acid chain; its full sequence is Signal peptidase complex catalytic subunit SEC11 (166 aa).

The Cytoplasmic segment spans residues M1–Q9. A helical; Signal-anchor for type II membrane protein transmembrane segment spans residues L10–V30. At A31 to E166 the chain is on the lumenal side. Catalysis depends on charge relay system residues S44, H83, and D108. Positions G152 to F163 are C-terminal short (CTS) helix.

Belongs to the peptidase S26B family. Component of the signal peptidase complex (SPC) composed of a catalytic subunit SEC11 and three accessory subunits SPC1, SPC2 and SPC3. The complex induces a local thinning of the ER membrane which is used to measure the length of the signal peptide (SP) h-region of protein substrates. This ensures the selectivity of the complex towards h-regions shorter than 18-20 amino acids. SPC associates with the translocon complex.

The protein localises to the endoplasmic reticulum membrane. The catalysed reaction is Cleavage of hydrophobic, N-terminal signal or leader sequences from secreted and periplasmic proteins.. Its function is as follows. Catalytic component of the signal peptidase complex (SPC) which catalyzes the cleavage of N-terminal signal sequences from nascent proteins as they are translocated into the lumen of the endoplasmic reticulum. Specifically cleaves N-terminal signal peptides that contain a hydrophobic alpha-helix (h-region) shorter than 18-20 amino acids. This chain is Signal peptidase complex catalytic subunit SEC11 (SEC11), found in Lodderomyces elongisporus (strain ATCC 11503 / CBS 2605 / JCM 1781 / NBRC 1676 / NRRL YB-4239) (Yeast).